Reading from the N-terminus, the 44-residue chain is Small ribosomal subunit protein eS7 (44 aa).

Residues 18-34 (KPTRKSRIKNKQKRPRS) are compositionally biased toward basic residues. Residues 18–44 (KPTRKSRIKNKQKRPRSRTLTAVHDAI) form a disordered region.

Belongs to the eukaryotic ribosomal protein eS7 family. As to quaternary structure, component of the small ribosomal subunit.

It localises to the cytoplasm. The protein localises to the cytoskeleton. The protein resides in the microtubule organizing center. It is found in the centrosome. Its subcellular location is the nucleus. Its function is as follows. Component of the small ribosomal subunit. The ribosome is a large ribonucleoprotein complex responsible for the synthesis of proteins in the cell. Required for rRNA maturation. This Salmo salar (Atlantic salmon) protein is Small ribosomal subunit protein eS7 (rps7).